We begin with the raw amino-acid sequence, 123 residues long: ATP synthase epsilon chain (123 aa).

The interval 96 to 123 (ESRKQSAETEHDKAVAESELRAVKRMEA) is disordered.

Belongs to the ATPase epsilon chain family. F-type ATPases have 2 components, CF(1) - the catalytic core - and CF(0) - the membrane proton channel. CF(1) has five subunits: alpha(3), beta(3), gamma(1), delta(1), epsilon(1). CF(0) has three main subunits: a, b and c.

The protein localises to the cell membrane. Its function is as follows. Produces ATP from ADP in the presence of a proton gradient across the membrane. This is ATP synthase epsilon chain from Corynebacterium jeikeium (strain K411).